The following is a 1040-amino-acid chain: DIS3-like exonuclease 1 (1040 aa).

Residues 232 to 310 form the CSD1 domain; the sequence is AGIKSGRYKQ…KGRTGALCEN (79 aa). A CSD2 domain is found at 360-426; it reads VLVMPWDYRI…AEIATILVEN (67 aa). Positions 459–808 constitute an RNB domain; the sequence is RLDLRETHLV…VHRLLLAAVN (350 aa).

It belongs to the RNR ribonuclease family. As to quaternary structure, component of the RNA exosome complex. Mg(2+) serves as cofactor.

It is found in the cytoplasm. It catalyses the reaction Exonucleolytic cleavage in the 3'- to 5'-direction to yield nucleoside 5'-phosphates.. Functionally, catalytic component of the RNA exosome complex which has 3'-&gt;5' exoribonuclease activity and participates in a multitude of cellular RNA processing and degradation events. The polypeptide is DIS3-like exonuclease 1 (dis3l) (Xenopus laevis (African clawed frog)).